The sequence spans 322 residues: Sideroflexin-1 (322 aa).

The residue at position 2 (serine 2) is an N-acetylserine. Residues 2 to 102 (SGEVPPNINI…MSAQVPMNMT (101 aa)) are Mitochondrial matrix-facing. A helical transmembrane segment spans residues 103–120 (ITGCMMTFYRTTPAVLFW). Residues 121 to 146 (QWINQSFNAVVNYTNRSGDAPLTVNE) are Mitochondrial intermembrane-facing. The chain crosses the membrane as a helical span at residues 147-167 (LGTAYVSATTGAVATALGLNA). The Mitochondrial matrix portion of the chain corresponds to 168-174 (LTKHVSP). The chain crosses the membrane as a helical span at residues 175–195 (LIGRFVPFAAVAAANCINIPL). Residues 196–228 (MRQRELKVGIPVTDENGTRLGESTNAAKQAITQ) are Mitochondrial intermembrane-facing. The helical transmembrane segment at 229–249 (VVISRILMAAPGMAIPPFIMN) threads the bilayer. The Mitochondrial matrix portion of the chain corresponds to 250-266 (TLEKKAFLKRFPWMSAP). The helical transmembrane segment at 267 to 287 (IQVTLVGFCLVFATPLCCALF) threads the bilayer. Residues 288–322 (PQKSSMSVTSLEDDLQASIQKSHPELRRVYFNKGL) lie on the Mitochondrial intermembrane side of the membrane.

It belongs to the sideroflexin family.

Its subcellular location is the mitochondrion inner membrane. The enzyme catalyses L-serine(in) = L-serine(out). It carries out the reaction L-alanine(in) = L-alanine(out). The catalysed reaction is L-cysteine(in) = L-cysteine(out). Amino acid transporter importing serine, an essential substrate of the mitochondrial branch of the one-carbon pathway, into mitochondria. Mitochondrial serine is then converted to glycine and formate, which exits to the cytosol where it is used to generate the charged folates that serve as one-carbon donors. May also transport other amino acids including alanine and cysteine. This chain is Sideroflexin-1 (Sfxn1), found in Rattus norvegicus (Rat).